We begin with the raw amino-acid sequence, 1722 residues long: Lymphocyte antigen 75 (1722 aa).

The N-terminal stretch at 1–27 is a signal peptide; it reads MGTRRVTPGCAAGLLVLLLRCFGLAEP. Residues 28-1666 lie on the Extracellular side of the membrane; the sequence is SEFSGDDSFT…VVCKVPLSPD (1639 aa). Residues 32–182 enclose the Ricin B-type lectin domain; that stretch reads GDDSFTIVNE…FLVGETWHHD (151 aa). N135 carries an N-linked (GlcNAc...) asparagine glycan. Residues 164-211 enclose the Fibronectin type-II domain; it reads SYGRPCEFPFLVGETWHHDCIRDENHSGPWCATTLNYEYDQKWGICLK. 4 cysteine pairs are disulfide-bonded: C169–C194, C183–C209, C247–C340, and C317–C332. In terms of domain architecture, C-type lectin 1 spans 225–341; that stretch reads QIGSCYQFNN…CEAQQPYVCK (117 aa). Residues N345 and N377 are each glycosylated (N-linked (GlcNAc...) asparagine). 3 consecutive C-type lectin domains span residues 368 to 486, 493 to 625, and 652 to 791; these read QNGF…YVCK, NDTR…ICKK, and SNLS…WVCQ. 2 cysteine pairs are disulfide-bonded: C389–C485 and C462–C477. Residue N529 is glycosylated (N-linked (GlcNAc...) asparagine). 3 disulfide bridges follow: C597-C614, C678-C790, and C752-C782. N-linked (GlcNAc...) asparagine glycosylation is found at N843 and N865. Y933 carries the phosphotyrosine modification. 2 N-linked (GlcNAc...) asparagine glycosylation sites follow: N934 and N1076. C-type lectin domains are found at residues 958–1091 and 1110–1222; these read FQNK…LCQK and YLNN…ICYY. Disulfide bonds link C1060/C1080 and C1197/C1211. N-linked (GlcNAc...) asparagine glycosylation is found at N1225, N1320, and N1392. Residues 1251–1374 form the C-type lectin 7 domain; the sequence is FQNSCYNFMI…VIDETLHFYQ (124 aa). C-type lectin domains lie at 1401–1513 and 1542–1661; these read YEDG…ICYK and YGDH…VCKV. C1488 and C1502 form a disulfide bridge. N1593 and N1626 each carry an N-linked (GlcNAc...) asparagine glycan. The cysteines at positions 1635 and 1650 are disulfide-linked. A helical transmembrane segment spans residues 1667 to 1691; that stretch reads YRGIAVLFAVLSVLALISGLIWFLV. Residues 1692–1722 lie on the Cytoplasmic side of the membrane; that stretch reads QRNHFRWTGLSSVRYEHGANEDEVMLPSFHD. A phosphoserine mark is found at S1703 and S1719.

In terms of tissue distribution, expressed in the thymus and cultured bone marrow cells.

It localises to the membrane. In terms of biological role, acts as an endocytic receptor to direct captured antigens from the extracellular space to a specialized antigen-processing compartment. Causes reduced proliferation of B lymphocytes. This is Lymphocyte antigen 75 (LY75) from Mesocricetus auratus (Golden hamster).